A 195-amino-acid polypeptide reads, in one-letter code: Imidazoleglycerol-phosphate dehydratase (195 aa).

It belongs to the imidazoleglycerol-phosphate dehydratase family.

It is found in the cytoplasm. The enzyme catalyses D-erythro-1-(imidazol-4-yl)glycerol 3-phosphate = 3-(imidazol-4-yl)-2-oxopropyl phosphate + H2O. Its pathway is amino-acid biosynthesis; L-histidine biosynthesis; L-histidine from 5-phospho-alpha-D-ribose 1-diphosphate: step 6/9. This Acetivibrio thermocellus (strain ATCC 27405 / DSM 1237 / JCM 9322 / NBRC 103400 / NCIMB 10682 / NRRL B-4536 / VPI 7372) (Clostridium thermocellum) protein is Imidazoleglycerol-phosphate dehydratase.